The primary structure comprises 486 residues: Probable glycine dehydrogenase (decarboxylating) subunit 2 (486 aa).

Position 273 is an N6-(pyridoxal phosphate)lysine (K273).

It belongs to the GcvP family. C-terminal subunit subfamily. The glycine cleavage system is composed of four proteins: P, T, L and H. In this organism, the P 'protein' is a heterodimer of two subunits. Pyridoxal 5'-phosphate is required as a cofactor.

It carries out the reaction N(6)-[(R)-lipoyl]-L-lysyl-[glycine-cleavage complex H protein] + glycine + H(+) = N(6)-[(R)-S(8)-aminomethyldihydrolipoyl]-L-lysyl-[glycine-cleavage complex H protein] + CO2. The glycine cleavage system catalyzes the degradation of glycine. The P protein binds the alpha-amino group of glycine through its pyridoxal phosphate cofactor; CO(2) is released and the remaining methylamine moiety is then transferred to the lipoamide cofactor of the H protein. The protein is Probable glycine dehydrogenase (decarboxylating) subunit 2 of Alkaliphilus oremlandii (strain OhILAs) (Clostridium oremlandii (strain OhILAs)).